Reading from the N-terminus, the 217-residue chain is Zinc finger CCHC-type and RNA-binding motif-containing protein 1 (217 aa).

The RRM domain occupies 10–88; sequence STVYVSNLPF…RVIKASIAID (79 aa). The CCHC-type zinc finger occupies 105-122; sequence SKCYECGESGHLSYACPK. The interval 120–217 is disordered; it reads CPKNMLGERE…YFSDEEELSD (98 aa). Residues 145-163 show a composition bias toward acidic residues; that stretch reads PEEEIEEVEVSEEEGEDPA. A phosphoserine mark is found at serine 155, serine 210, and serine 216.

Component of the U11/U12 snRNPs that are part of the U12-type spliceosome. Interacts with ZRSR1. As to expression, expressed at higher level in heart and testis, and at lower level in cerebellum. Weakly expressed at low level in liver.

Its subcellular location is the nucleus. It localises to the nucleoplasm. The sequence is that of Zinc finger CCHC-type and RNA-binding motif-containing protein 1 (Zcrb1) from Mus musculus (Mouse).